Consider the following 55-residue polypeptide: ATP synthase F(0) complex subunit 8 (55 aa).

A helical transmembrane segment spans residues 7 to 24 (NPWFYIMLMSWLTFSLII). Positions 35 to 55 (NPPSNKTSTTTRTLPWTWPWT) are disordered. Positions 41–55 (TSTTTRTLPWTWPWT) are enriched in low complexity.

The protein belongs to the ATPase protein 8 family. As to quaternary structure, component of the ATP synthase complex composed at least of ATP5F1A/subunit alpha, ATP5F1B/subunit beta, ATP5MC1/subunit c (homooctomer), MT-ATP6/subunit a, MT-ATP8/subunit 8, ATP5ME/subunit e, ATP5MF/subunit f, ATP5MG/subunit g, ATP5MK/subunit k, ATP5MJ/subunit j, ATP5F1C/subunit gamma, ATP5F1D/subunit delta, ATP5F1E/subunit epsilon, ATP5PF/subunit F6, ATP5PB/subunit b, ATP5PD/subunit d, ATP5PO/subunit OSCP. ATP synthase complex consists of a soluble F(1) head domain (subunits alpha(3) and beta(3)) - the catalytic core - and a membrane F(0) domain - the membrane proton channel (subunits c, a, 8, e, f, g, k and j). These two domains are linked by a central stalk (subunits gamma, delta, and epsilon) rotating inside the F1 region and a stationary peripheral stalk (subunits F6, b, d, and OSCP).

The protein localises to the mitochondrion membrane. Its function is as follows. Subunit 8, of the mitochondrial membrane ATP synthase complex (F(1)F(0) ATP synthase or Complex V) that produces ATP from ADP in the presence of a proton gradient across the membrane which is generated by electron transport complexes of the respiratory chain. ATP synthase complex consist of a soluble F(1) head domain - the catalytic core - and a membrane F(1) domain - the membrane proton channel. These two domains are linked by a central stalk rotating inside the F(1) region and a stationary peripheral stalk. During catalysis, ATP synthesis in the catalytic domain of F(1) is coupled via a rotary mechanism of the central stalk subunits to proton translocation. In vivo, can only synthesize ATP although its ATP hydrolase activity can be activated artificially in vitro. Part of the complex F(0) domain. This is ATP synthase F(0) complex subunit 8 from Corythaixoides concolor (Grey go-away-bird).